A 428-amino-acid chain; its full sequence is Dihydroorotase (428 aa).

Zn(2+) is bound by residues His-59 and His-61. Residues 61-63 (HLR) and Asn-93 contribute to the substrate site. Positions 151, 178, and 231 each coordinate Zn(2+). Asn-277 provides a ligand contact to substrate. Asp-304 contacts Zn(2+). Residue Asp-304 is part of the active site. Substrate-binding positions include His-308 and 322–323 (FG).

It belongs to the metallo-dependent hydrolases superfamily. DHOase family. Class I DHOase subfamily. Zn(2+) is required as a cofactor.

It carries out the reaction (S)-dihydroorotate + H2O = N-carbamoyl-L-aspartate + H(+). It participates in pyrimidine metabolism; UMP biosynthesis via de novo pathway; (S)-dihydroorotate from bicarbonate: step 3/3. Its function is as follows. Catalyzes the reversible cyclization of carbamoyl aspartate to dihydroorotate. The protein is Dihydroorotase of Bacillus cereus (strain AH187).